The chain runs to 504 residues: Hexose transporter 1 (504 aa).

The Cytoplasmic segment spans residues 1-29 (MTKSSKDICSENEGKKNGKSGFFSTSFKY). Residues 30-50 (VLSACIASFIFGYQVSVLNTI) traverse the membrane as a helical segment. Residues 51-78 (KNFIVVEFEWCKGEKDRLNCSNNTIQSS) lie on the Extracellular side of the membrane. A disulfide bond links C61 and C70. Residues 79–99 (FLLASVFIGAVLGCGFSGYLV) traverse the membrane as a helical segment. Over 100–104 (QFGRR) the chain is Cytoplasmic. The helical transmembrane segment at 105–125 (LSLLIIYNFFFLVSILTSITH) threads the bilayer. The Extracellular segment spans residues 126 to 129 (HFHT). A helical transmembrane segment spans residues 130-150 (ILFARLLSGFGIGLVTVSVPM). Over 151–165 (YISEMTHKDKKGAYG) the chain is Cytoplasmic. Residues 166 to 186 (VMHQLFITFGIFVAVMLGLAM) traverse the membrane as a helical segment. Residue Q169 participates in alpha-D-glucose binding. Residue Q169 coordinates beta-D-glucose. Over 187–207 (GEGPKADSTEPLTSFAKLWWR) the chain is Extracellular. A helical transmembrane segment spans residues 208-228 (LMFLFPSVISLIGILALVVFF). Topologically, residues 229-293 (KEETPYFLFE…SALKIPSYRY (65 aa)) are cytoplasmic. Residues 294-314 (VIILGCLLSGLQQFTGINVLV) traverse the membrane as a helical segment. Q305, Q306, and N311 together coordinate alpha-D-glucose. Position 305 (Q305) interacts with beta-D-glucose. A beta-D-glucose-binding site is contributed by N311. At 315–331 (SNSNELYKEFLDSHLIT) the chain is on the extracellular side. The helical transmembrane segment at 332-352 (ILSVVMTAVNFLMTFPAIYIV) threads the bilayer. N341 lines the beta-D-glucose pocket. Over 353–358 (EKLGRK) the chain is Cytoplasmic. A helical membrane pass occupies residues 359–379 (TLLLWGCVGVLVAYLPTAIAN). Residues 380–392 (EINRNSNFVKILS) are Extracellular-facing. Residues 393 to 413 (IVATFVMIISFAVSYGPVLWI) traverse the membrane as a helical segment. An alpha-D-glucose-binding site is contributed by W412. The Cytoplasmic segment spans residues 414–429 (YLHEMFPSEIKDSAAS). A helical membrane pass occupies residues 430-450 (LASLVNWVCAIIVVFPSDIII). The Extracellular segment spans residues 451–455 (KKSPS). Residues 456 to 476 (ILFIVFSVMSILTFFFIFFFI) traverse the membrane as a helical segment. At 477–504 (KETKGGEIGTSPYITMEERQKHMTKSVV) the chain is on the cytoplasmic side.

It belongs to the major facilitator superfamily. Sugar transporter (TC 2.A.1.1) family. In terms of assembly, homodimer.

It localises to the cell membrane. It carries out the reaction D-glucose(out) = D-glucose(in). The catalysed reaction is D-fructose(out) = D-fructose(in). The enzyme catalyses D-galactose(in) = D-galactose(out). It catalyses the reaction D-mannose(out) = D-mannose(in). It carries out the reaction D-glucosamine(out) = D-glucosamine(in). The catalysed reaction is D-xylose(out) = D-xylose(in). Its activity is regulated as follows. Inhibited by cytochalasin B. Inhibited by compound 3361 (3-O-((undec-10-en)-1-yl)-D-glucose). Inhibited by compound HTI-1. Functionally, sodium-independent facilitative hexose transporter. Can transport D-glucose and D-fructose. Can transport D-mannose, D-galactose, D-xylose and D-glucosamine. The protein is Hexose transporter 1 of Plasmodium falciparum (isolate 3D7).